Consider the following 301-residue polypeptide: MPINIPNGLPAASVLAGEQIFVMTEERATHQDIRPLTLLFLNLMPKKIATEIQYMRKLSNTPLQVNIDLLRVDKHISKNTPQPHLDTFYKDFEEIEGRNYDGMIITGAPLDQIDFSDVTYWDKLEKIITWSKEHVTSTLFSCWGVAAGLKIFYDLPLINRKEKLSGVFLHHTAQSLNPLIRGFDDTFLAPHSRFIDFPSDVIRKHTDLEILADSEITGMFLAATPDRRQVFVTGHPEYDATTLSDEYRRDLAAGKDPKLPENYFPHDDPTQIPSCVWRSHASLLFGNWLNYYVYQITPYKW.

The active-site Acyl-thioester intermediate is cysteine 142. Residues lysine 163 and serine 192 each contribute to the substrate site. Histidine 235 functions as the Proton acceptor in the catalytic mechanism. Residue glutamate 237 is part of the active site. Arginine 249 contributes to the substrate binding site.

The protein belongs to the MetA family.

Its subcellular location is the cytoplasm. The catalysed reaction is L-homoserine + acetyl-CoA = O-acetyl-L-homoserine + CoA. The protein operates within amino-acid biosynthesis; L-methionine biosynthesis via de novo pathway; O-acetyl-L-homoserine from L-homoserine: step 1/1. Transfers an acetyl group from acetyl-CoA to L-homoserine, forming acetyl-L-homoserine. The chain is Homoserine O-acetyltransferase from Succinatimonas hippei (strain DSM 22608 / JCM 16073 / KCTC 15190 / YIT 12066).